A 303-amino-acid chain; its full sequence is Coenzyme PQQ synthesis protein B (303 aa).

The protein belongs to the PqqB family.

Its pathway is cofactor biosynthesis; pyrroloquinoline quinone biosynthesis. May be involved in the transport of PQQ or its precursor to the periplasm. This Pseudomonas syringae pv. syringae (strain B728a) protein is Coenzyme PQQ synthesis protein B.